Here is a 343-residue protein sequence, read N- to C-terminus: E3 ubiquitin-protein ligase SP1 (343 aa).

A helical transmembrane segment spans residues 1 to 21 (MIPWGGVTCCLSAAALYLLGR). Over 22-222 (SSGRDAEVLE…LISNLGKWSR (201 aa)) the chain is Chloroplast intermembrane. The chain crosses the membrane as a helical span at residues 223–244 (LYKYASMGFTVLGVFLITKHVI). The Cytoplasmic segment spans residues 245–343 (DSVLERRRRR…IDLAVKTYRH (99 aa)). The RING-type zinc-finger motif lies at 296-331 (CVICLEQEYNAVFVPCGHMCCCTACSSHLTSCPLCR).

In terms of assembly, interacts with TOC33, TOC75-3 and TOC159. In terms of processing, auto-ubiquitinated.

It localises to the plastid. Its subcellular location is the chloroplast outer membrane. It carries out the reaction S-ubiquitinyl-[E2 ubiquitin-conjugating enzyme]-L-cysteine + [acceptor protein]-L-lysine = [E2 ubiquitin-conjugating enzyme]-L-cysteine + N(6)-ubiquitinyl-[acceptor protein]-L-lysine.. It participates in protein modification; protein ubiquitination. E3 ubiquitin-protein ligase involved in the regulation of protein import in the chloroplast. Associates with TOC complexes and mediates ubiquitination of TOC components, promoting their degradation via the ubiquitin-proteasome system (UPS). Plays a role in the reorganization of the TOC machinery. Involved in a mechanism that regulates plastid biogenesis via UPS. Promotes stress tolerance by depleting the chloroplast protein import apparatus, which limits photosystem assembly and the potential for reactive oxygen species (ROS) formation. May act as negative regulator of programmed cell death (PCD) during biotic stress. The sequence is that of E3 ubiquitin-protein ligase SP1 from Arabidopsis thaliana (Mouse-ear cress).